Reading from the N-terminus, the 208-residue chain is HGLPAQCPNADGTMVHTCCLHGMPTFKLNFDSHFTIKTVVAQNGTELPESILPEATIDRIPPSSHDLESVRGNLVRKNVDRLSLQEVNSLVHALKRMQKDRSSDGFESIACFHALPPLCPNPTAKHRYACCLHGMATFPQWHRLYVVQFEQSLNRHGATVGVPYTDWTYPMKEVPHLLTSEKYTDPFTAVETFNPFNHGHLSLLSPET.

H1 is a Cu cation binding site. The interval 1 to 74 (HGLPAQCPNA…HDLESVRGNL (74 aa)) is unit E. A disulfide bridge connects residues C7 and C18. The segment at residues 19–21 (CLH) is a cross-link (2'-(S-cysteinyl)-histidine (Cys-His)). A glycan (N-linked (GlcNAc...) asparagine) is linked at N43. Residues 75 to 208 (VRKNVDRLSL…GHLSLLSPET (134 aa)) are unit F. A Cu cation-binding site is contributed by H113. A disulfide bridge links C119 with C130. Positions 131–133 (CLH) form a cross-link, 2'-(S-cysteinyl)-histidine (Cys-His). H133 and H142 together coordinate Cu cation.

It belongs to the tyrosinase family. Hemocyanin subfamily. In terms of assembly, decamers of large identical subunits (390 kDa), each containing 8 globular oxygen-binding functional units. The cofactor is Cu(2+).

Hemocyanins are copper-containing oxygen carriers occurring freely dissolved in the hemolymph of many mollusks and arthropods. In Sepia officinalis (Common cuttlefish), this protein is Hemocyanin, units E and F.